We begin with the raw amino-acid sequence, 53 residues long: Large ribosomal subunit protein bL33B (53 aa).

Belongs to the bacterial ribosomal protein bL33 family.

The protein is Large ribosomal subunit protein bL33B of Sorangium cellulosum (strain So ce56) (Polyangium cellulosum (strain So ce56)).